A 63-amino-acid polypeptide reads, in one-letter code: MHFSGVVLILLSMTLVNFVFVETKVETGQYVKCKYDICAKSCQEEKGKRTGFCSNPECICSKD.

The first 23 residues, 1 to 23 (MHFSGVVLILLSMTLVNFVFVET), serve as a signal peptide directing secretion. 3 disulfides stabilise this stretch: C33–C53, C38–C58, and C42–C60.

As to expression, expressed by the venom gland.

Its subcellular location is the secreted. This is Cysteine-rich peptide clone 2 from Tityus costatus (Brazilian scorpion).